Consider the following 277-residue polypeptide: 3-methyl-2-oxobutanoate hydroxymethyltransferase (277 aa).

Residues D49 and D88 each coordinate Mg(2+). 3-methyl-2-oxobutanoate contacts are provided by residues D49–S50, D88, and K118. Position 120 (E120) interacts with Mg(2+). E186 serves as the catalytic Proton acceptor.

This sequence belongs to the PanB family. In terms of assembly, homodecamer; pentamer of dimers. It depends on Mg(2+) as a cofactor.

The protein localises to the cytoplasm. It catalyses the reaction 3-methyl-2-oxobutanoate + (6R)-5,10-methylene-5,6,7,8-tetrahydrofolate + H2O = 2-dehydropantoate + (6S)-5,6,7,8-tetrahydrofolate. It functions in the pathway cofactor biosynthesis; (R)-pantothenate biosynthesis; (R)-pantoate from 3-methyl-2-oxobutanoate: step 1/2. Its function is as follows. Catalyzes the reversible reaction in which hydroxymethyl group from 5,10-methylenetetrahydrofolate is transferred onto alpha-ketoisovalerate to form ketopantoate. The protein is 3-methyl-2-oxobutanoate hydroxymethyltransferase of Cereibacter sphaeroides (strain ATCC 17025 / ATH 2.4.3) (Rhodobacter sphaeroides).